We begin with the raw amino-acid sequence, 120 residues long: UPF0231 protein NT01EI_0766 (120 aa).

The protein belongs to the UPF0231 family.

This is UPF0231 protein NT01EI_0766 from Edwardsiella ictaluri (strain 93-146).